The chain runs to 385 residues: MKETVVVAMSGGVDSSVTAALLLEQGYDVIGVTLQIWPKDAPEGAEGGCCSLSAVEDAKRVASKLGVPHYVLNFRDYFETEVIEYFGREYLAGQTPNPCIRCNRVIKFEGLLQKSLALGAAKVATGHYARIEQDSATGRYRLGRGIDANKDQSYALFNMTQEQLSRTLFPLGGFTKPEIREKAAQLGLAVASKPDSQEICFIPDNDYRRFLEERYPDHRFQPGPFVDQEGNVIGTHRGLPFYTVGQRKGLGVAFGFPAYVIALDVEHNAVVIGPDEAVKGRRLLADDLNWIDIAGLKAPMEVEAKIRYSASPAIAVISPVKDGSAVIVEFAAPQRAITPGQAVVFYRGDWVVGGGTIVRNLDLKLPEIRHPEPKPVKGVKAKGRV.

Residues 8–15 (AMSGGVDS) and leucine 34 contribute to the ATP site. Cysteine 102 serves as the catalytic Nucleophile. Cysteine 102 and cysteine 200 are disulfide-bonded. An ATP-binding site is contributed by glycine 126. The interaction with tRNA stretch occupies residues 150–152 (KDQ). Catalysis depends on cysteine 200, which acts as the Cysteine persulfide intermediate. The tract at residues 307 to 308 (RY) is interaction with tRNA.

The protein belongs to the MnmA/TRMU family.

It localises to the cytoplasm. The catalysed reaction is S-sulfanyl-L-cysteinyl-[protein] + uridine(34) in tRNA + AH2 + ATP = 2-thiouridine(34) in tRNA + L-cysteinyl-[protein] + A + AMP + diphosphate + H(+). Catalyzes the 2-thiolation of uridine at the wobble position (U34) of tRNA, leading to the formation of s(2)U34. This is tRNA-specific 2-thiouridylase MnmA from Heliobacterium modesticaldum (strain ATCC 51547 / Ice1).